Here is a 487-residue protein sequence, read N- to C-terminus: MNQKLSEQELIRRQKIEKLQKLGVEVFHETVKFDLNINKIIQKYNSFSKDELAKDEFSLSTTGRIITIRSSFLVLKSQGSKFQIYLPIKELDKKYLELIDLLDIGDIIFVNGKLMKTQTGELTLRANELKLLSKSLKVLPDKFHGLNDIEERYRHRYVDLIVNDDVRKTFLLRSRIISLIRKYFDNLEYLEVDTPVLQPILGGASAKPFITKFNALNSNFYLRIATELPLKKLVVGGFDRVYEIGRIFRNEGVDTTHNPEFTSIEYYEAYSNNEGMMNRTEDLFKFIAKELNLKTIFFNGYEIDLNKPFRRLNMVEALNEKLGIDLYKISFEDAKVLAKKHHIKVESYFKIGHIINELFELFIEKDLIQPTFVYGHPIEISPLANKNKKNPNFTDRAELFIGTKEYANMFTELTDPIDQLERFKDQQNEKDNGNEEANEIDYDFVEALEYGLPPTGGCGIGIDRLVMLFTNNESIREVLLFPHLKNK.

2 residues coordinate Mg(2+): E398 and E405.

It belongs to the class-II aminoacyl-tRNA synthetase family. Homodimer. The cofactor is Mg(2+).

The protein resides in the cytoplasm. The enzyme catalyses tRNA(Lys) + L-lysine + ATP = L-lysyl-tRNA(Lys) + AMP + diphosphate. This Mycoplasma mobile (strain ATCC 43663 / 163K / NCTC 11711) (Mesomycoplasma mobile) protein is Lysine--tRNA ligase.